The following is a 111-amino-acid chain: Flagellar hook-basal body complex protein FliE (111 aa).

It belongs to the FliE family.

It is found in the bacterial flagellum basal body. This is Flagellar hook-basal body complex protein FliE from Clostridium acetobutylicum (strain ATCC 824 / DSM 792 / JCM 1419 / IAM 19013 / LMG 5710 / NBRC 13948 / NRRL B-527 / VKM B-1787 / 2291 / W).